The sequence spans 485 residues: Zinc finger protein 639 (485 aa).

Basic residues predominate over residues 1-14 (MNEYPKKRKRKTLH). The interval 1-20 (MNEYPKKRKRKTLHPSRYSD) is disordered. Ser-60 bears the Phosphoserine mark. Lys-76 is covalently cross-linked (Glycyl lysine isopeptide (Lys-Gly) (interchain with G-Cter in SUMO2)). Ser-88 bears the Phosphoserine mark. Glycyl lysine isopeptide (Lys-Gly) (interchain with G-Cter in SUMO2) cross-links involve residues Lys-177, Lys-181, and Lys-226. C2H2-type zinc fingers lie at residues 204 to 227 (YKCE…ILKH), 233 to 255 (NVCR…AKLH), 260 to 283 (YICK…ADTH), 289 to 311 (YWCE…FQEH), 374 to 397 (FVCQ…AIEH), 403 to 425 (HVCD…LNSH), 431 to 454 (YLCQ…DFKH), and 460 to 482 (HKCS…LPVH). An interaction with CTNNA2 region spans residues 371–455 (KNFFVCQVCG…LKIHLDFKHS (85 aa)).

This sequence belongs to the krueppel C2H2-type zinc-finger protein family. In terms of assembly, interacts with CTNNA2.

Its subcellular location is the nucleus. In terms of biological role, binds DNA and may function as a transcriptional repressor. The polypeptide is Zinc finger protein 639 (ZNF639) (Homo sapiens (Human)).